Consider the following 320-residue polypeptide: MADETTTDTPDVQDEDAPDEDAPQTPDDTASDSTGEAAAADTDADAPDENAPDEDAPDAAPQDKDDGDDAPEESSSEEETSHRVTIEELLKAGAHFGHLTSRWNPRMEKYIFMERNNIHIIDLMQSQVLLDEAAEAAKRFARRGKKILFAGTKKQAEDIVREHAEECGMPHMVDRWLGGTMTNFQTIRKSIRRMEEIERMDRDGTLDKLKKKEKLMRLREHEKLEETLGGIRDMANLPSAIYIVDVQREDIAVSEANNLGIPIIAMVDTNGNPKNIDYPIPVNDDALSSIELVTSTLTDAVQEGLQERRMKKEEKKKAAA.

The segment covering 1-22 has biased composition (acidic residues); the sequence is MADETTTDTPDVQDEDAPDEDA. Positions 1-83 are disordered; sequence MADETTTDTP…SSSEEETSHR (83 aa). Positions 27–41 are enriched in low complexity; the sequence is DDTASDSTGEAAAAD. 2 stretches are compositionally biased toward acidic residues: residues 42–57 and 65–78; these read TDAD…EDAP and DDGD…SSEE.

It belongs to the universal ribosomal protein uS2 family.

This is Small ribosomal subunit protein uS2 from Salinibacter ruber (strain DSM 13855 / M31).